A 146-amino-acid polypeptide reads, in one-letter code: Hemoglobin subunit beta (146 aa).

N-acetylvaline is present on Val1. Positions 2–146 (HLTDAEKNLV…VANALAHKYH (145 aa)) constitute a Globin domain. Heme b is bound at residue His63. N6-acetyllysine is present on Lys82. His92 lines the heme b pocket. At Cys93 the chain carries S-nitrosocysteine. Lys144 carries the post-translational modification N6-acetyllysine.

The protein belongs to the globin family. In terms of assembly, heterotetramer of two alpha chains and two beta chains. In terms of tissue distribution, red blood cells.

Involved in oxygen transport from the lung to the various peripheral tissues. The sequence is that of Hemoglobin subunit beta (HBB) from Mesocricetus brandti (Brandt's hamster).